The following is a 237-amino-acid chain: Small ribosomal subunit protein uS2c (237 aa).

Belongs to the universal ribosomal protein uS2 family.

Its subcellular location is the plastid. The sequence is that of Small ribosomal subunit protein uS2c (rps2) from Epifagus virginiana (Beechdrops).